The sequence spans 89 residues: Small ribosomal subunit protein bS16 (89 aa).

It belongs to the bacterial ribosomal protein bS16 family.

In Chloroflexus aggregans (strain MD-66 / DSM 9485), this protein is Small ribosomal subunit protein bS16.